Reading from the N-terminus, the 320-residue chain is Phospho-N-acetylmuramoyl-pentapeptide-transferase (320 aa).

9 helical membrane-spanning segments follow: residues 5-25 (FWAFTRAFIVTVIFMPAVIKF), 51-71 (MGGALFIAAASLSALIGSVAY), 75-95 (IGFVMVLIPILAVVAYAIIGG), 121-141 (LCAVVIMIIMWIMQIPLILNI), 143-163 (FIGVFNLGIFYFIFLWFWLVG), 176-196 (GLLTGTSLIVYLVYTWIALGV), 198-218 (NHIIVIFNASIIGALVGFLLF), 241-261 (IESIVLGIPFSLLWFGLIFVI), and 300-320 (IDALFWIVTAIIGIIGILYMS).

Belongs to the glycosyltransferase 4 family. MraY subfamily. Mg(2+) serves as cofactor.

It localises to the cell membrane. The enzyme catalyses UDP-N-acetyl-alpha-D-muramoyl-L-alanyl-gamma-D-glutamyl-L-lysyl-D-alanyl-D-alanine + di-trans,octa-cis-undecaprenyl phosphate = Mur2Ac(oyl-L-Ala-gamma-D-Glu-L-Lys-D-Ala-D-Ala)-di-trans,octa-cis-undecaprenyl diphosphate + UMP. Its pathway is cell wall biogenesis; peptidoglycan biosynthesis. In terms of biological role, catalyzes the initial step of the lipid cycle reactions in the biosynthesis of the cell wall peptidoglycan: transfers peptidoglycan precursor phospho-MurNAc-pentapeptide from UDP-MurNAc-pentapeptide onto the lipid carrier undecaprenyl phosphate, yielding undecaprenyl-pyrophosphoryl-MurNAc-pentapeptide, known as lipid I. This Leuconostoc mesenteroides subsp. mesenteroides (strain ATCC 8293 / DSM 20343 / BCRC 11652 / CCM 1803 / JCM 6124 / NCDO 523 / NBRC 100496 / NCIMB 8023 / NCTC 12954 / NRRL B-1118 / 37Y) protein is Phospho-N-acetylmuramoyl-pentapeptide-transferase.